The primary structure comprises 327 residues: GMP reductase (327 aa).

The active-site Thioimidate intermediate is cysteine 176. Residue isoleucine 205–valine 228 coordinates NADP(+).

The protein belongs to the IMPDH/GMPR family. GuaC type 2 subfamily.

The enzyme catalyses IMP + NH4(+) + NADP(+) = GMP + NADPH + 2 H(+). Catalyzes the irreversible NADPH-dependent deamination of GMP to IMP. It functions in the conversion of nucleobase, nucleoside and nucleotide derivatives of G to A nucleotides, and in maintaining the intracellular balance of A and G nucleotides. This is GMP reductase from Streptococcus pyogenes serotype M5 (strain Manfredo).